The chain runs to 122 residues: Fluoride-specific ion channel FluC (122 aa).

The next 4 helical transmembrane spans lie at 4 to 24 (LAVLVGGGVGALVRYLVSIFI), 33 to 53 (LGTMVINTTGAFLIGFLSIYL), 66 to 86 (LLITGFLGGYTTFSTFTLEGI), and 95 to 115 (LKAFYYIVGTNVIGFLFVALG). Positions 73 and 76 each coordinate Na(+).

The protein belongs to the fluoride channel Fluc/FEX (TC 1.A.43) family.

It is found in the cell inner membrane. The enzyme catalyses fluoride(in) = fluoride(out). Its activity is regulated as follows. Na(+) is not transported, but it plays an essential structural role and its presence is essential for fluoride channel function. Its function is as follows. Fluoride-specific ion channel. Important for reducing fluoride concentration in the cell, thus reducing its toxicity. This is Fluoride-specific ion channel FluC from Hydrogenobaculum sp. (strain Y04AAS1).